The chain runs to 500 residues: Taxoid 7-beta-hydroxylase (500 aa).

Residues 24 to 44 (PAILSTALTAIAGIIVLLVIT) traverse the membrane as a helical segment. Cys446 is a heme binding site.

The protein belongs to the cytochrome P450 family.

The protein resides in the microsome membrane. It carries out the reaction taxusin + reduced [NADPH--hemoprotein reductase] + O2 = 7beta-hydroxytaxusin + oxidized [NADPH--hemoprotein reductase] + H2O + H(+). It catalyses the reaction 2alpha-hydroxytaxusin + reduced [NADPH--hemoprotein reductase] + O2 = 2alpha,7beta-dihydroxytaxusin + oxidized [NADPH--hemoprotein reductase] + H2O + H(+). The enzyme catalyses 7beta-hydroxytaxusin + reduced [NADPH--hemoprotein reductase] + O2 = 2alpha,7beta-dihydroxytaxusin + oxidized [NADPH--hemoprotein reductase] + H2O + H(+). Its pathway is alkaloid biosynthesis; taxol biosynthesis. In terms of biological role, catalyzes the conversion of taxusin to 7-beta-hydroxytaxusin in taxol biosynthesis. Catalyzes the conversion of 2-alpha-hydroxytaxusin to 2-alpha-7-beta-hydroxytaxusin in taxol biosynthesis. This Taxus cuspidata (Japanese yew) protein is Taxoid 7-beta-hydroxylase.